A 402-amino-acid polypeptide reads, in one-letter code: Zinc finger protein 322 (402 aa).

The C2H2-type 1; atypical zinc finger occupies Tyr43–His65. 8 C2H2-type zinc fingers span residues Tyr71–His93, Tyr99–His121, Tyr127–His149, Tyr155–His177, Phe183–His205, Tyr211–His233, Tyr239–His261, and Tyr267–His289. The C2H2-type 10; degenerate zinc-finger motif lies at Phe293–His315. The segment at Tyr351 to His373 adopts a C2H2-type 11; degenerate zinc-finger fold. Ser391 carries the phosphoserine modification.

It belongs to the krueppel C2H2-type zinc-finger protein family. In terms of assembly, interacts with POU5F1. In terms of tissue distribution, ubiquitous. Highly expressed in heart and skeletal muscle.

The protein localises to the cytoplasm. Its subcellular location is the nucleus. In terms of biological role, transcriptional activator. Important for maintenance of pluripotency in embryonic stem cells. Binds directly to the POU5F1 distal enhancer and the NANOG proximal promoter, and enhances expression of both genes. Can also bind to numerous other gene promoters and regulates expression of many other pluripotency factors, either directly or indirectly. Promotes inhibition of MAPK signaling during embryonic stem cell differentiation. This Homo sapiens (Human) protein is Zinc finger protein 322 (ZNF322).